Reading from the N-terminus, the 1491-residue chain is CLIP-associating protein (1491 aa).

4 HEAT repeats span residues 44 to 82 (CTDM…RLGS), 85 to 123 (NAYT…HRVL), 163 to 201 (QLSV…HVGD), and 402 to 440 (DAFC…YTHA). 2 disordered regions span residues 537-586 (RERE…AVDT) and 600-739 (LYSR…NNPV). Gly residues predominate over residues 542-551 (GGGGGTGTGT). The span at 569–580 (GTLQKPTPSMRS) shows a compositional bias: polar residues. Serine 582, serine 626, and serine 634 each carry phosphoserine. The segment covering 632-646 (LNSNSGGTPATTPGS) has biased composition (polar residues). Threonine 648 carries the phosphothreonine modification. 2 stretches are compositionally biased toward polar residues: residues 657 to 671 (VSQS…SPST) and 699 to 712 (PRST…SPTR). 5 positions are modified to phosphoserine: serine 806, serine 817, serine 820, serine 822, and serine 824. HEAT repeat units lie at residues 874-912 (QQQL…VHAN) and 955-993 (QLQL…TYCK). Disordered regions lie at residues 1065–1127 (HMRR…SVEQ) and 1167–1205 (GHLQ…ESAT). 3 stretches are compositionally biased toward low complexity: residues 1070-1097 (SQSC…QSPS), 1111-1124 (LSIS…RQSS), and 1181-1200 (ASLS…QSNT). Serine 1120, serine 1123, and serine 1124 each carry phosphoserine. HEAT repeat units lie at residues 1289 to 1327 (NKHF…SNKM) and 1408 to 1446 (DAHL…VLGE).

It belongs to the CLASP family. As to quaternary structure, interacts with CLIP-190 and microtubules. As to expression, expressed in testis and ovary.

It is found in the cytoplasm. Its subcellular location is the cytoskeleton. The protein resides in the nucleus. The protein localises to the microtubule organizing center. It localises to the centrosome. It is found in the spindle. Its subcellular location is the cell projection. The protein resides in the growth cone. The protein localises to the cleavage furrow. Functionally, microtubule plus-end tracking protein that promotes the stabilization of dynamic microtubules. Required for several aspects of mitotic spindle formation including the formation of the overlapping central spindle microtubules and kinetochore attachment. Required for the incorporation of tubulin subunits at the plus ends of kinetochore microtubules during poleward microtubule flux. Acts antagonistically to Klp10A and Klp67A to maintain metaphase spindle length. Also required for guidance of CNS axons downstream of Abl. May function to identify a subset of microtubules that probe the peripheral growth cone domain, where guidance signals exert their influence on cytoskeletal organization. Also required during oogenesis for the organization of the polarized microtubule network inside the 16-cell cyst that ensures oocyte differentiation. The polypeptide is CLIP-associating protein (chb) (Drosophila melanogaster (Fruit fly)).